Reading from the N-terminus, the 472-residue chain is Pentatricopeptide repeat-containing protein At3g18970 (472 aa).

PPR repeat units follow at residues asparagine 107–lysine 139, serine 146–threonine 180, tryptophan 181–valine 216, threonine 219–proline 253, aspartate 256–lysine 286, asparagine 287–proline 321, asparagine 322–arginine 352, and valine 358–lysine 388. Residues leucine 393–valine 472 are type E motif; degenerate.

Belongs to the PPR family. PCMP-E subfamily.

This is Pentatricopeptide repeat-containing protein At3g18970 (PCMP-E93) from Arabidopsis thaliana (Mouse-ear cress).